The primary structure comprises 665 residues: Potassium-transporting ATPase ATP-binding subunit (665 aa).

Transmembrane regions (helical) follow at residues methionine 28–phenylalanine 48, tyrosine 56–methionine 76, isoleucine 207–isoleucine 227, and isoleucine 244–isoleucine 264. Aspartate 295 acts as the 4-aspartylphosphate intermediate in catalysis. ATP contacts are provided by residues aspartate 332, glutamate 336, phenylalanine 364–serine 371, and lysine 382. Residues aspartate 501 and aspartate 505 each contribute to the Mg(2+) site. A run of 3 helical transmembrane segments spans residues tyrosine 570–leucine 590, isoleucine 596–leucine 616, and valine 644–valine 664.

The protein belongs to the cation transport ATPase (P-type) (TC 3.A.3) family. Type IA subfamily. The system is composed of three essential subunits: KdpA, KdpB and KdpC.

It is found in the cell membrane. The enzyme catalyses K(+)(out) + ATP + H2O = K(+)(in) + ADP + phosphate + H(+). In terms of biological role, part of the high-affinity ATP-driven potassium transport (or Kdp) system, which catalyzes the hydrolysis of ATP coupled with the electrogenic transport of potassium into the cytoplasm. This subunit is responsible for energy coupling to the transport system and for the release of the potassium ions to the cytoplasm. The chain is Potassium-transporting ATPase ATP-binding subunit from Thermoplasma acidophilum (strain ATCC 25905 / DSM 1728 / JCM 9062 / NBRC 15155 / AMRC-C165).